A 73-amino-acid polypeptide reads, in one-letter code: MTKTISISDDVYEMLVKIKGKRSFSEVIRELVKKEGNFDLLMVAFGTRSEEEVEKLKREMKEVEEWMQSLCNH.

This sequence belongs to the UPF0330 family.

Its function is as follows. Possibly the antitoxin component of a type II toxin-antitoxin (TA) system. Its cognate toxin is VapC18 (Potential). The polypeptide is Putative antitoxin VapB18 (vapB18) (Archaeoglobus fulgidus (strain ATCC 49558 / DSM 4304 / JCM 9628 / NBRC 100126 / VC-16)).